The chain runs to 208 residues: Large ribosomal subunit protein bL25 (208 aa).

This sequence belongs to the bacterial ribosomal protein bL25 family. CTC subfamily. In terms of assembly, part of the 50S ribosomal subunit; part of the 5S rRNA/L5/L18/L25 subcomplex. Contacts the 5S rRNA. Binds to the 5S rRNA independently of L5 and L18.

This is one of the proteins that binds to the 5S RNA in the ribosome where it forms part of the central protuberance. The polypeptide is Large ribosomal subunit protein bL25 (Leptothrix cholodnii (strain ATCC 51168 / LMG 8142 / SP-6) (Leptothrix discophora (strain SP-6))).